Here is a 296-residue protein sequence, read N- to C-terminus: Coatomer subunit epsilon (296 aa).

It belongs to the COPE family. As to quaternary structure, oligomeric complex that consists of at least the alpha, beta, beta', gamma, delta, epsilon and zeta subunits. Interacts with the ESCRT-0 subunit VPS27.

Its subcellular location is the cytoplasm. It localises to the golgi apparatus membrane. It is found in the cytoplasmic vesicle. The protein resides in the COPI-coated vesicle membrane. Functionally, the coatomer is a cytosolic protein complex that binds to dilysine motifs and reversibly associates with Golgi non-clathrin-coated vesicles, which further mediate biosynthetic protein transport from the ER, via the Golgi up to the trans Golgi network. The coatomer complex is required for budding from Golgi membranes, and is essential for the retrograde Golgi-to-ER transport of dilysine-tagged proteins. The chain is Coatomer subunit epsilon (SEC28) from Saccharomyces cerevisiae (strain ATCC 204508 / S288c) (Baker's yeast).